Here is a 333-residue protein sequence, read N- to C-terminus: CMP-N-acetylneuraminate-beta-galactosamide-alpha-2,3-sialyltransferase 4 (333 aa).

Residues 1–8 (MTSKSHWK) are Cytoplasmic-facing. A helical; Signal-anchor for type II membrane protein membrane pass occupies residues 9–26 (LLALALVLVVVMVWYSIS). Residues 27–333 (REDRYIEFFY…MGAVKNLTYF (307 aa)) are Lumenal-facing. Residues Asn61, Asn131, Asn310, and Asn329 are each glycosylated (N-linked (GlcNAc...) asparagine). Residues Cys120 and Cys273 are joined by a disulfide bond.

The protein belongs to the glycosyltransferase 29 family. In terms of tissue distribution, broadly expressed among tissues with highest levels in the small intestine and colon.

The protein resides in the golgi apparatus. It localises to the golgi stack membrane. The catalysed reaction is a beta-D-galactosyl-(1-&gt;3)-N-acetyl-beta-D-galactosaminyl derivative + CMP-N-acetyl-beta-neuraminate = an N-acetyl-alpha-neuraminyl-(2-&gt;3)-beta-D-galactosyl-(1-&gt;3)-N-acetyl-beta-D-galactosaminyl derivative + CMP + H(+). It carries out the reaction a beta-D-galactosyl-(1-&gt;3)-N-acetyl-alpha-D-galactosaminyl derivative + CMP-N-acetyl-beta-neuraminate = an N-acetyl-alpha-neuraminyl-(2-&gt;3)-beta-D-galactosyl-(1-&gt;3)-N-acetyl-alpha-D-galactosaminyl derivative + CMP + H(+). It catalyses the reaction a beta-D-galactosyl-(1-&gt;4)-N-acetyl-beta-D-glucosaminyl derivative + CMP-N-acetyl-beta-neuraminate = an N-acetyl-alpha-neuraminyl-(2-&gt;3)-beta-D-galactosyl-(1-&gt;4)-N-acetyl-beta-D-glucosaminyl derivative + CMP + H(+). The enzyme catalyses a ganglioside GM1 (d18:1(4E)) + CMP-N-acetyl-beta-neuraminate = a ganglioside GD1a (d18:1(4E)) + CMP + H(+). The catalysed reaction is a ganglioside GA1 (d18:1(4E)) + CMP-N-acetyl-beta-neuraminate = a ganglioside GM1b (d18:1(4E)) + CMP + H(+). It carries out the reaction a ganglioside GT1c (d18:1(4E)) + CMP-N-acetyl-beta-neuraminate = a ganglioside GQ1c (d18:1(4E)) + CMP + H(+). It catalyses the reaction a neolactoside nLc4Cer + CMP-N-acetyl-beta-neuraminate = a neolactoside IV(3)-alpha-NeuAc-nLc4Cer + CMP + H(+). The enzyme catalyses a neolactoside nLc4Cer(d18:1(4E)) + CMP-N-acetyl-beta-neuraminate = a neolactoside IV(3)-alpha-NeuAc-nLc4Cer(d18:1(4E)) + CMP + H(+). It functions in the pathway protein modification; protein glycosylation. In terms of biological role, a beta-galactoside alpha2-3 sialyltransferase involved in terminal sialylation of glycoproteins and glycolipids. Catalyzes the transfer of sialic acid (N-acetyl-neuraminic acid; Neu5Ac) from the nucleotide sugar donor CMP-Neu5Ac onto acceptor Galbeta-(1-&gt;3)-GalNAc- and Galbeta-(1-&gt;4)-GlcNAc-terminated glycoconjugates through an alpha2-3 linkage. Plays a major role in hemostasis. Responsible for sialylation of plasma VWF/von Willebrand factor, preventing its recognition by asialoglycoprotein receptors (ASGPR) and subsequent clearance. Regulates ASGPR-mediated clearance of platelets. Participates in the biosynthesis of the sialyl Lewis X epitopes, both on O- and N-glycans, which are recognized by SELE/E-selectin, SELP/P-selectin and SELL/L-selectin. Essential for selectin-mediated rolling and adhesion of leukocytes during extravasation. Contributes to adhesion and transendothelial migration of neutrophils likely through terminal sialylation of CXCR2. In glycosphingolipid biosynthesis, sialylates GM1 and GA1 gangliosides to form GD1a and GM1b, respectively. Metabolizes brain c-series ganglioside GT1c forming GQ1c. Synthesizes ganglioside LM1 (IV3Neu5Ac-nLc4Cer), a major structural component of peripheral nerve myelin. The chain is CMP-N-acetylneuraminate-beta-galactosamide-alpha-2,3-sialyltransferase 4 (St3gal4) from Mus musculus (Mouse).